The primary structure comprises 203 residues: Cytochrome c biogenesis CcmF N-terminal-like mitochondrial protein 2 (203 aa).

2 helical membrane-spanning segments follow: residues isoleucine 44–alanine 64 and isoleucine 143–methionine 163.

This sequence belongs to the CcmF/CycK/Ccl1/NrfE/CcsA family. In terms of assembly, interacts with CCMFC, CCMFN1, CCMH and CYTC-1.

Its subcellular location is the mitochondrion inner membrane. In terms of biological role, forms a complex with CCMFC, CCMFN1 and CCMH that performs the assembly of heme with c-type apocytochromes in mitochondria. This chain is Cytochrome c biogenesis CcmF N-terminal-like mitochondrial protein 2, found in Arabidopsis thaliana (Mouse-ear cress).